A 178-amino-acid chain; its full sequence is 5,6,7,8-tetrahydromethanopterin hydro-lyase (178 aa).

Catalysis depends on His-33, which acts as the Proton donor. 5 residues coordinate substrate: Asp-35, Leu-64, Lys-82, Thr-84, and Gln-99.

This sequence belongs to the formaldehyde-activating enzyme family.

The protein resides in the cytoplasm. It catalyses the reaction 5,6,7,8-tetrahydromethanopterin + formaldehyde = 5,10-methylenetetrahydromethanopterin + H2O. Functionally, catalyzes the condensation of formaldehyde with tetrahydromethanopterin (H(4)MPT) to 5,10-methylenetetrahydromethanopterin. The polypeptide is 5,6,7,8-tetrahydromethanopterin hydro-lyase (faeA) (Methanosarcina barkeri (strain Fusaro / DSM 804)).